A 108-amino-acid chain; its full sequence is Competence protein ComGC (108 aa).

The N-terminal stretch at 1 to 13 (MKKMMTFLKKAKV) is a signal peptide. A may be involved in polymerization of ComGC region spans residues 14 to 39 (KAFTLVEMLVVLLIISVLFLLFVPNL). The residue at position 16 (Phe-16) is an N-methylphenylalanine. The helical transmembrane segment at 16–36 (FTLVEMLVVLLIISVLFLLFV) threads the bilayer.

It belongs to the ComGC family. In terms of assembly, the transformation pili are flexible filaments, consisting mainly of the major pilin ComGC and smaller amounts of the minor pilins, including at least ComGD, ComGF and ComGG, and perhaps ComGE. Homodimer. Forms higher-order multimers. Interacts with ComGG; the interaction is probably direct. Post-translationally, undergoes proteolytic cleavage.

The protein resides in the cell membrane. Its subcellular location is the cell surface. It is found in the fimbrium. The protein localises to the secreted. In terms of biological role, major component of the type IV-like pilus (T4P) that plays a role in transformation. Transformation pili are dynamically extended and retracted, perhaps thereby promoting DNA uptake and transformation. Required for transformation. Required for DNA binding. This chain is Competence protein ComGC, found in Streptococcus pneumoniae (strain ATCC BAA-255 / R6).